Consider the following 502-residue polypeptide: Zinc finger protein 488 (502 aa).

An SET domain is found at 8 to 130 (RSLWTNDSKI…EGEELLVWYD (123 aa)). Y129 contacts S-adenosyl-L-methionine. Residues 151 to 174 (YTCTRCGQAFKNENPFLAHCRFLC) form a C2H2-type 1; atypical zinc finger. 2 disordered regions span residues 267–303 (SEPT…KSSR) and 338–361 (PSKR…LDSF). Over residues 269 to 286 (PTDNAQTNESKISKNSAF) the composition is skewed to polar residues. C2H2-type zinc fingers lie at residues 438–460 (NWCA…MRSH) and 479–501 (LTCP…MTSH).

Belongs to the krueppel C2H2-type zinc-finger protein family. Expressed in pMN progenitors and oligodendrocyte lineage cells in the embryo with expression declining in oligodendrocytes undergoing differentiation.

Its subcellular location is the nucleus. In terms of biological role, transcriptional repressor. May have histone methyltransferase activity. Negatively regulates shh signaling activity in pMN progenitor cells which prevents their switch from motor neuron to oligodendrocyte precursor cell production. Independently of shh activity, also regulates oligodendrocyte formation. The sequence is that of Zinc finger protein 488 from Danio rerio (Zebrafish).